We begin with the raw amino-acid sequence, 320 residues long: MAQVLRGTVTDFPGFDERADAETLRKAMKGLGTDEESILTLLTSRSNAQRQEISAAFKTLFGRDLLDDLKSELTGKFEKLIVALMKPSRLYDAYELKHALKGAGTNEKVLTEIIASRTPEELRAIKQVYEEEYGSSLEDDVVGDTSGYYQRMLVVLLQANRDPDAGIDEAQVEQDAQALFQAGELKWGTDEEKFITIFGTRSVSHLRKVFDKYMTISGFQIEETIDRETSGNLEQLLLAVVKSIRSIPAYLAETLYYAMKGAGTDDHTLIRVMVSRSEIDLFNIRKEFRKNFATSLYSMIKGDTSGDYKKALLLLCGEDD.

Ala-2 is subject to N-acetylalanine. Annexin repeat units follow at residues 15 to 86 (FDER…ALMK), 87 to 158 (PSRL…VLLQ), 170 to 242 (AQVE…AVVK), and 246 to 317 (SIPA…LLCG). Lys-29 participates in a covalent cross-link: Glycyl lysine isopeptide (Lys-Gly) (interchain with G-Cter in SUMO1); alternate. Lys-29 is covalently cross-linked (Glycyl lysine isopeptide (Lys-Gly) (interchain with G-Cter in SUMO2); alternate). Ser-37 bears the Phosphoserine mark. Residues Lys-70, Lys-76, Lys-79, Lys-97, and Lys-101 each carry the N6-acetyllysine modification. Position 290 is an N6-succinyllysine (Lys-290). A [IL]-x-C-x-x-[DE] motif motif is present at residues 314–319 (LLCGED).

This sequence belongs to the annexin family. As to quaternary structure, monomer. Binds ATRX and EIF5B. Interacts with hepatitis B virus (HBV). S-nitrosylation is induced by interferon-gamma and oxidatively-modified low-densitity lipoprotein (LDL(ox)) possibly implicating the iNOS-S100A8/9 transnitrosylase complex.

In terms of biological role, this protein is an anticoagulant protein that acts as an indirect inhibitor of the thromboplastin-specific complex, which is involved in the blood coagulation cascade. The polypeptide is Annexin A5 (ANXA5) (Homo sapiens (Human)).